A 98-amino-acid chain; its full sequence is uncharacterized protein (98 aa).

Helical transmembrane passes span 2–22 and 70–90; these read IVTL…GLWW and AAKA…LPIL.

It is found in the cell membrane. This is an uncharacterized protein from Sinorhizobium fredii (strain NBRC 101917 / NGR234).